We begin with the raw amino-acid sequence, 321 residues long: Methionyl-tRNA formyltransferase (321 aa).

Position 112-115 (112-115) interacts with (6S)-5,6,7,8-tetrahydrofolate; the sequence is GLLP.

The protein belongs to the Fmt family.

It carries out the reaction L-methionyl-tRNA(fMet) + (6R)-10-formyltetrahydrofolate = N-formyl-L-methionyl-tRNA(fMet) + (6S)-5,6,7,8-tetrahydrofolate + H(+). Attaches a formyl group to the free amino group of methionyl-tRNA(fMet). The formyl group appears to play a dual role in the initiator identity of N-formylmethionyl-tRNA by promoting its recognition by IF2 and preventing the misappropriation of this tRNA by the elongation apparatus. This is Methionyl-tRNA formyltransferase from Chlamydia caviae (strain ATCC VR-813 / DSM 19441 / 03DC25 / GPIC) (Chlamydophila caviae).